Consider the following 186-residue polypeptide: Elongation factor P (186 aa).

The protein belongs to the elongation factor P family.

It is found in the cytoplasm. Its pathway is protein biosynthesis; polypeptide chain elongation. Its function is as follows. Involved in peptide bond synthesis. Stimulates efficient translation and peptide-bond synthesis on native or reconstituted 70S ribosomes in vitro. Probably functions indirectly by altering the affinity of the ribosome for aminoacyl-tRNA, thus increasing their reactivity as acceptors for peptidyl transferase. This is Elongation factor P from Ruminiclostridium cellulolyticum (strain ATCC 35319 / DSM 5812 / JCM 6584 / H10) (Clostridium cellulolyticum).